We begin with the raw amino-acid sequence, 78 residues long: Defensin-like protein 141 (78 aa).

An N-terminal signal peptide occupies residues 1–24 (MTKSIISAFFIILILGMMVNEIEG). Intrachain disulfides connect Cys31-Cys76, Cys40-Cys59, Cys45-Cys70, and Cys49-Cys72.

The protein belongs to the DEFL family.

The protein localises to the secreted. The polypeptide is Defensin-like protein 141 (LCR3) (Arabidopsis thaliana (Mouse-ear cress)).